The chain runs to 436 residues: Xylose isomerase (436 aa).

D306 and D308 together coordinate Mg(2+).

This sequence belongs to the xylose isomerase family. As to quaternary structure, homotetramer. The cofactor is Mg(2+).

Its subcellular location is the cytoplasm. The enzyme catalyses alpha-D-xylose = alpha-D-xylulofuranose. The chain is Xylose isomerase from Rhizobium rhizogenes (strain K84 / ATCC BAA-868) (Agrobacterium radiobacter).